Consider the following 928-residue polypeptide: Chitin synthase 2 (928 aa).

Disordered regions lie at residues 1–45 (MAYN…EAYA) and 110–179 (AYYT…SPAP). The span at 17–28 (PSAQPQYDSRSP) shows a compositional bias: polar residues. Residues 130-140 (PSHDEPYRPDT) are compositionally biased toward basic and acidic residues. 9 consecutive transmembrane segments (helical) span residues 472–492 (SAFG…YVAL), 570–589 (WLNG…YQLW), 613–633 (LFAW…TASL), 644–664 (TVLG…CFIL), 678–698 (MMMV…SIFL), 723–743 (FFGL…ASFL), 753–773 (CFLQ…IYAF), 854–874 (VTAW…IAGF), and 893–913 (VILW…CWFL).

This sequence belongs to the chitin synthase family. Class I subfamily.

Its subcellular location is the cell membrane. The enzyme catalyses [(1-&gt;4)-N-acetyl-beta-D-glucosaminyl](n) + UDP-N-acetyl-alpha-D-glucosamine = [(1-&gt;4)-N-acetyl-beta-D-glucosaminyl](n+1) + UDP + H(+). In terms of biological role, polymerizes chitin, a structural polymer of the cell wall and septum, by transferring the sugar moiety of UDP-GlcNAc to the non-reducing end of the growing chitin polymer. CHS2 plays a synergistic role to CHS1 in normal yeast cell reproductive growth, even if this role is less predominant than for CHS1. With CHS3, plays an important role in virulence. This chain is Chitin synthase 2, found in Exophiala dermatitidis (Black yeast-like fungus).